The sequence spans 366 residues: Sigma54-dependent transcriptional activator SfnR (366 aa).

The Sigma-54 factor interaction domain occupies 21 to 250 (QVFEDPRSQA…LENVIHHSLL (230 aa)). Residues 49–56 (GETGTGKE) and 112–121 (ANGGTLFLDE) contribute to the ATP site.

Involved in the dimethyl sulfide degradation pathway. Activates the expression of sfnG and sfnF. This Pseudomonas putida (Arthrobacter siderocapsulatus) protein is Sigma54-dependent transcriptional activator SfnR.